Reading from the N-terminus, the 835-residue chain is Protein translocase subunit SecA 1 (835 aa).

ATP contacts are provided by residues Q85, 103–107 (GEGKT), and D492. The interval 788-807 (VQGEAVHPSSDGEEAKKKPV) is disordered. Zn(2+)-binding residues include C819, C821, C830, and C831.

This sequence belongs to the SecA family. Monomer and homodimer. Part of the essential Sec protein translocation apparatus which comprises SecA, SecYEG and auxiliary proteins SecDF. Other proteins may also be involved. Zn(2+) is required as a cofactor.

The protein resides in the cell membrane. The protein localises to the cytoplasm. It carries out the reaction ATP + H2O + cellular proteinSide 1 = ADP + phosphate + cellular proteinSide 2.. Functionally, part of the Sec protein translocase complex. Interacts with the SecYEG preprotein conducting channel. Has a central role in coupling the hydrolysis of ATP to the transfer of proteins into and across the cell membrane, serving as an ATP-driven molecular motor driving the stepwise translocation of polypeptide chains across the membrane. The sequence is that of Protein translocase subunit SecA 1 from Bacillus thuringiensis (strain Al Hakam).